The chain runs to 83 residues: MSGSTGERSFADIITSIRYWVIHSITIPSLFIAGWLFVSTGLAYDVFGSPRPNEYFTESRQGIPLITGRFDPLDQLDEFSRSF.

Residues 21-35 (VIHSITIPSLFIAGW) traverse the membrane as a helical segment. Residue H23 coordinates heme.

It belongs to the PsbE/PsbF family. Heterodimer of an alpha subunit and a beta subunit. PSII is composed of 1 copy each of membrane proteins PsbA, PsbB, PsbC, PsbD, PsbE, PsbF, PsbH, PsbI, PsbJ, PsbK, PsbL, PsbM, PsbT, PsbX, PsbY, PsbZ, Psb30/Ycf12, at least 3 peripheral proteins of the oxygen-evolving complex and a large number of cofactors. It forms dimeric complexes. Heme b serves as cofactor.

It localises to the plastid. The protein resides in the chloroplast thylakoid membrane. This b-type cytochrome is tightly associated with the reaction center of photosystem II (PSII). PSII is a light-driven water:plastoquinone oxidoreductase that uses light energy to abstract electrons from H(2)O, generating O(2) and a proton gradient subsequently used for ATP formation. It consists of a core antenna complex that captures photons, and an electron transfer chain that converts photonic excitation into a charge separation. This Acorus calamus (Sweet flag) protein is Cytochrome b559 subunit alpha.